Reading from the N-terminus, the 175-residue chain is Gamma-crystallin B (175 aa).

Beta/gamma crystallin 'Greek key' domains are found at residues glycine 2–serine 40 and glycine 41–proline 83. N-linked (Glc) (glycation) lysine; in vitro glycosylation occurs at lysine 3. Residues cysteine 19 and cysteine 23 are joined by a disulfide bond. Positions glutamine 84–threonine 88 are connecting peptide. 2 Beta/gamma crystallin 'Greek key' domains span residues phenylalanine 89 to glutamate 129 and glycine 130 to methionine 172.

This sequence belongs to the beta/gamma-crystallin family.

In terms of biological role, crystallins are the dominant structural components of the vertebrate eye lens. The polypeptide is Gamma-crystallin B (CRYGB) (Bos taurus (Bovine)).